A 177-amino-acid chain; its full sequence is Early nodulin-like protein 15 (177 aa).

The first 24 residues, M1–A24, serve as a signal peptide directing secretion. The region spanning N25–T129 is the Phytocyanin domain. C83 and C117 are disulfide-bonded. N-linked (GlcNAc...) asparagine glycosylation occurs at N84. The GPI-anchor amidated serine moiety is linked to residue S153. Positions G154 to F177 are cleaved as a propeptide — removed in mature form.

Belongs to the early nodulin-like (ENODL) family. In terms of tissue distribution, mostly expressed in seedlings, siliques and flowers, and, to a lower extent, in roots, stems and seeds, but barely in leaves.

The protein localises to the cell membrane. Functionally, may act as a carbohydrate transporter. Required, together with ENODL11, ENODL12, ENODL13, ENODL14 and ENODL15, for male-female communication and pollen tube reception and burst at the synergid cell surface of the female gametophyte. The protein is Early nodulin-like protein 15 of Arabidopsis thaliana (Mouse-ear cress).